Consider the following 128-residue polypeptide: Kinase-associated lipoprotein B (128 aa).

The signal sequence occupies residues 1–25; the sequence is MSTFETGSIVKGFYKTGVYIGEITA. Cys26 carries N-palmitoyl cysteine lipidation. The S-diacylglycerol cysteine moiety is linked to residue Cys26.

The protein resides in the cell membrane. May play a role in the activation or the expression of KinB. The chain is Kinase-associated lipoprotein B (kapB) from Bacillus subtilis (strain 168).